The chain runs to 449 residues: Pectate lyase L (449 aa).

The N-terminal stretch at 1-26 is a signal peptide; the sequence is MFKRNDRSKNGFNALRLGVSFVLASS. Cys-27 is lipidated: N-palmitoyl cysteine. Cys-27 is lipidated: S-diacylglycerol cysteine. PbH1 repeat units follow at residues 158–179, 180–202, 213–242, 245–267, 274–308, 336–358, and 359–391; these read GDFW…IYIG, GSNN…QLGR, PANN…AAKL, GSGN…DLYS, IGAV…KLGG, PGTI…AFDK, and GEHV…WWKN. Ca(2+) is bound by residues Asp-236, Asp-260, Asp-261, and Asp-264. Lys-305 (proton acceptor) is an active-site residue.

The protein belongs to the polysaccharide lyase 9 family. It depends on Ca(2+) as a cofactor.

The protein localises to the secreted. It catalyses the reaction Eliminative cleavage of (1-&gt;4)-alpha-D-galacturonan to give oligosaccharides with 4-deoxy-alpha-D-galact-4-enuronosyl groups at their non-reducing ends.. Activated in presence of the surfactant polysorbate 20, while inhibited in the presence of polysorbate 40, polysorbate 60, polysorbate 80, Triton X-100 and sodium dodecyl sulfate. Inhibited by the metal chelator ethylenediaminetetraacetic acid (EDTA). Inhibited by iron and cobalt ions. In terms of biological role, presents an endo-cleaving activity on the homogalacturonan (HG) region in pectin with a preference for low- or unmethylated pectin. The protein is Pectate lyase L of Paenibacillus polymyxa (strain SC2) (Bacillus polymyxa).